The primary structure comprises 859 residues: Leucine--tRNA ligase (859 aa).

The 'HIGH' region motif lies at 42 to 52; the sequence is PYPSGRLHMGH. The 'KMSKS' region signature appears at 618-622; the sequence is KMSKS. Lysine 621 lines the ATP pocket.

Belongs to the class-I aminoacyl-tRNA synthetase family.

It localises to the cytoplasm. It carries out the reaction tRNA(Leu) + L-leucine + ATP = L-leucyl-tRNA(Leu) + AMP + diphosphate. The protein is Leucine--tRNA ligase of Shewanella baltica (strain OS195).